Here is a 695-residue protein sequence, read N- to C-terminus: NADPH--cytochrome P450 reductase (695 aa).

The Lumenal segment spans residues 1 to 8 (MAQLDTLD). Residues 9–31 (LVVLAVLLVGSVAYFTKGTYWAV) traverse the membrane as a helical segment. The Cytoplasmic segment spans residues 32-695 (AKDPYASTGP…SGSYQEDVWS (664 aa)). A Flavodoxin-like domain is found at 66–221 (CVIFYGSQTG…DFLAWKEPMW (156 aa)). FMN-binding positions include 72 to 77 (SQTGTA), 123 to 126 (ATYG), 169 to 178 (LGNNTYEHYN), and aspartate 204. The region spanning 277 to 538 (HNPFIAPIAE…HVRHSNFKLP (262 aa)) is the FAD-binding FR-type domain. An NADP(+)-binding site is contributed by arginine 296. FAD contacts are provided by residues 451 to 454 (RYYS), 469 to 471 (TAV), and 486 to 489 (GVTT). NADP(+) contacts are provided by residues threonine 552, 614–615 (SR), 620–624 (KVYVQ), and glutamate 656. Position 694 (tryptophan 694) interacts with FAD.

This sequence belongs to the NADPH--cytochrome P450 reductase family. The protein in the N-terminal section; belongs to the flavodoxin family. It in the C-terminal section; belongs to the flavoprotein pyridine nucleotide cytochrome reductase family. The cofactor is FAD. FMN serves as cofactor.

It is found in the endoplasmic reticulum membrane. Its subcellular location is the mitochondrion outer membrane. It localises to the cell membrane. It carries out the reaction 2 oxidized [cytochrome P450] + NADPH = 2 reduced [cytochrome P450] + NADP(+) + H(+). Functionally, this enzyme is required for electron transfer from NADP to cytochrome P450 in microsomes. It can also provide electron transfer to heme oxygenase and cytochrome B5. Involved in ergosterol biosynthesis. The protein is NADPH--cytochrome P450 reductase of Aspergillus niger (strain ATCC MYA-4892 / CBS 513.88 / FGSC A1513).